The primary structure comprises 193 residues: dCTP deaminase (193 aa).

DCTP is bound by residues 110–115, aspartate 128, 136–138, tyrosine 171, lysine 178, and glutamine 182; these read RSSLAR and VLE. Glutamate 138 serves as the catalytic Proton donor/acceptor.

Belongs to the dCTP deaminase family. In terms of assembly, homotrimer.

The catalysed reaction is dCTP + H2O + H(+) = dUTP + NH4(+). The protein operates within pyrimidine metabolism; dUMP biosynthesis; dUMP from dCTP (dUTP route): step 1/2. Catalyzes the deamination of dCTP to dUTP. In Buchnera aphidicola subsp. Acyrthosiphon pisum (strain APS) (Acyrthosiphon pisum symbiotic bacterium), this protein is dCTP deaminase.